We begin with the raw amino-acid sequence, 305 residues long: Acetaldehyde dehydrogenase 5 (305 aa).

Position 11-14 (11-14) interacts with NAD(+); the sequence is SGNI. Residue Cys-130 is the Acyl-thioester intermediate of the active site. Residues 161–169 and Asn-272 contribute to the NAD(+) site; that span reads SIGPGTRAN.

Belongs to the acetaldehyde dehydrogenase family.

The enzyme catalyses acetaldehyde + NAD(+) + CoA = acetyl-CoA + NADH + H(+). The polypeptide is Acetaldehyde dehydrogenase 5 (Dechloromonas aromatica (strain RCB)).